A 188-amino-acid polypeptide reads, in one-letter code: Multiple organellar RNA editing factor 7, mitochondrial (188 aa).

A mitochondrion-targeting transit peptide spans 1 to 20; sequence MARIIRRPLNLTAAVRFRLS. A disordered region spans residues 169 to 188; the sequence is DAKSGVVKKKHRRKRKKKLI. Residues 174–188 are compositionally biased toward basic residues; it reads VVKKKHRRKRKKKLI.

It belongs to the MORF family. As to quaternary structure, heterodimers with MORF8/RIP1, MORF5/RIP5 and MORF6/RIP6.

It is found in the mitochondrion. Involved in organellar RNA editing. Required for the processing of few RNA editing sites in mitochondria. The sequence is that of Multiple organellar RNA editing factor 7, mitochondrial from Arabidopsis thaliana (Mouse-ear cress).